A 371-amino-acid polypeptide reads, in one-letter code: DNA repair protein RAD14 (371 aa).

The interval 26-48 (LSSDQLNRIESRNEPLKTRPLAV) is disordered. A compositionally biased stretch (basic and acidic residues) spans 32–42 (NRIESRNEPLK). Zn(2+) is bound by residues C191, C194, C213, and C216. The segment at 191-216 (CIECHINIEMDPVLHDVFKLQVCKQC) is a zinc-finger region.

This sequence belongs to the XPA family. Two monomers bind to kinked/damaged DNA (construct with only the C-terminal DNA-binding domain). Component of the nucleotide excision repair factor 1 (NEF1) complex consisting of RAD1, RAD10 and RAD14.

It localises to the nucleus. Involved in nucleotide excision repair. Binds specifically to damaged DNA. Required for the incision step. The protein is DNA repair protein RAD14 (RAD14) of Saccharomyces cerevisiae (strain ATCC 204508 / S288c) (Baker's yeast).